We begin with the raw amino-acid sequence, 106 residues long: Small ribosomal subunit protein bS20 (106 aa).

Basic residues predominate over residues 1–32; that stretch reads MAQKKPKRNLSALKRHRQSLKRRLRNKAKKSA. A disordered region spans residues 1–33; it reads MAQKKPKRNLSALKRHRQSLKRRLRNKAKKSAI.

It belongs to the bacterial ribosomal protein bS20 family.

Binds directly to 16S ribosomal RNA. This Thermus thermophilus (strain ATCC BAA-163 / DSM 7039 / HB27) protein is Small ribosomal subunit protein bS20 (rpsT).